Consider the following 1249-residue polypeptide: Protein transport protein Sec31A (1249 aa).

WD repeat units follow at residues 4–47 (KEID…EIFE), 64–111 (SSSH…AGDK), 120–160 (KHTG…TPMT), 166–206 (QPPE…PIIK), 209–254 (DHSN…SPLR), 258–298 (NHAR…VLYE), and 301–342 (TNTQ…DGLR). The interaction with SEC13 stretch occupies residues 161-470 (PGAKTQPPED…IDASQTDFEK (310 aa)). A WD 8; interaction with SEC13 repeat occupies 397 to 429 (SFSFGGKLVTFENVTGQPQQGAEQPRRQPVFIS). Asymmetric dimethylarginine is present on Arg423. Ser526 and Ser531 each carry phosphoserine. Lys647 participates in a covalent cross-link: Glycyl lysine isopeptide (Lys-Gly) (interchain with G-Cter in ubiquitin). 3 disordered regions span residues 790-829 (QGRS…VQSQ), 842-940 (TTWS…RYPN), and 954-1123 (PHMY…PIGN). A compositionally biased stretch (polar residues) spans 796–805 (GQESSRSSYE). Ser799 carries the phosphoserine modification. The interaction with PDCD6 stretch occupies residues 800 to 1142 (SRSSYEGQPL…TEKITKKPIP (343 aa)). Residues 873 to 879 (GFIMHGN) carry the ALG-2-binding site motif-2 (ABS-2) motif. Pro residues predominate over residues 898–908 (QPPPYPQPQPY). Composition is skewed to low complexity over residues 961-970 (PASSPTSSSA) and 991-1007 (PSSS…GTPP). Residues 1013-1024 (PASQRTGPQNGW) show a composition bias toward polar residues. Residues 1056–1074 (PGGDPQPQGLQQQPSASGP) show a composition bias toward low complexity. At Thr1190 the chain carries Phosphothreonine. At Ser1192 the chain carries Phosphoserine. Lys1246 participates in a covalent cross-link: Glycyl lysine isopeptide (Lys-Gly) (interchain with G-Cter in ubiquitin).

This sequence belongs to the WD repeat SEC31 family. COPII is composed of at least 5 proteins: the SEC23/24 complex, the SEC13/31 complex and SAR1. SEC13 and SEC31 make a 2:2 tetramer that forms the edge element of the COPII outer coat. The tetramer self-assembles in multiple copies to form the complete polyhedral cage. Interacts (via WD 8) with SEC13. Interacts with PDCD6; interaction takes place in response to cytosolic calcium increase and leads to bridge together the BCR(KLHL12) complex and SEC31A, leading to monoubiquitination. Interacts with KLHL12. Monoubiquitinated by the BCR(KLHL12) E3 ubiquitin ligase complex, leading to regulate the size of COPII coats. Ubiquitously expressed.

It is found in the cytoplasm. The protein resides in the cytoplasmic vesicle. It localises to the COPII-coated vesicle membrane. The protein localises to the endoplasmic reticulum membrane. In terms of biological role, component of the coat protein complex II (COPII) which promotes the formation of transport vesicles from the endoplasmic reticulum (ER). The coat has two main functions, the physical deformation of the endoplasmic reticulum membrane into vesicles and the selection of cargo molecules. The protein is Protein transport protein Sec31A (Sec31a) of Rattus norvegicus (Rat).